Reading from the N-terminus, the 404-residue chain is 6-hydroxytryptophan 2,3-dioxygenase fscD (404 aa).

Histidine 341 contacts heme b.

This sequence belongs to the indoleamine 2,3-dioxygenase family. It depends on heme as a cofactor.

The protein operates within secondary metabolite biosynthesis. In terms of biological role, 6-hydroxytryptophan 2,3-dioxygenase; part of the fragmented gene cluster that mediates the biosynthesis of fusarochromene, a tryptophan-derived metabolite closely related to a group of mycotoxins including fusarochromanone. Within the pathway, fscD is responsible of the cleavage of the pyrrole ring of 6-hydroxytryptophan. The first step of the pathway is the epimerization of L-tryptophan to D-tryptophan in the presence of the NRPS-like tryptophan epimerase fscC. D-tryptophan is subsequently hydroxylated by the tryptophan 6-hydroxylase fscE to yield 6-hydroxytryptophan. The pyrrole ring undergoes cleavaged by the tryptophan 2,3-dioxygenase fscD and is finally converted to 4-hydroxykyrunenine by the hydrolase fscH. The NRPS-like oxidoreductase fscA reduces the carboxyl group to primary alcohol and the DMATS-type prenyltransferase fscG performs prenylation, followed by the formation of a chromene ring catalyzed by the oxidoreductase fscI, which leads to desacetylfusarochromene. Epoxidation by fscF and rearrangement reactions of chromene double bonds convert compound desacetylfusarochromene to fusarochromanones. Although specific acetyltransferases were not found near the fsc gene cluster, several predicted enzymes containing the N-acetyltransferase superfamily domain are present in the genome of F.equiseti. These predicted enzymes may have the potential to convert desacetylfusarochromene to fusarochromene. The chain is 6-hydroxytryptophan 2,3-dioxygenase fscD from Fusarium equiseti (Fusarium scirpi).